An 89-amino-acid polypeptide reads, in one-letter code: Large ribosomal subunit protein bL27 (89 aa).

The disordered stretch occupies residues 1–21; the sequence is MAHKKAGGSSRNGRDSQSKRL.

The protein belongs to the bacterial ribosomal protein bL27 family.

This Rhizobium leguminosarum bv. trifolii (strain WSM2304) protein is Large ribosomal subunit protein bL27.